The sequence spans 256 residues: (R)-S-adenosyl-L-methionine hydrolase (256 aa).

Adenosine is bound by residues Asp-7, His-41, Asp-68, and Asn-183. (R)-S-adenosyl-L-methionine contacts are provided by Asn-183, Tyr-212, Ser-226, Glu-231, Val-234, and Met-236. Val-234 provides a ligand contact to adenosine.

This sequence belongs to the SAM hydrolase / SAM-dependent halogenase family. In terms of assembly, homotrimer.

The catalysed reaction is (R)-S-adenosyl-L-methionine + H2O = adenosine + L-methionine + H(+). In terms of biological role, catalyzes the hydrolysis of S-adenosyl-L-methionine (SAM) into adenosine and L-methionine. Is likely stereoselective, specifically hydrolyzing (R)-S-adenosyl-L-methionine ((R)-SAM), the inactive form of the ubiquitous cofactor SAM, and not the active form of SAM, (S)-S-adenosyl-L-methionine. Probaly plays a role in preventing accumulation of (R)-S-adenosyl-L-methionine in cells; maintenance of (S)-S-denosyl-L-methionine homochirality is important for cellular health given that the (R)-form is largely inactive as a methyl donor and can function as an inhibitor of methyltransferases. Is unable to mediate a fluorination or chlorination reaction with SAM. The protein is (R)-S-adenosyl-L-methionine hydrolase of Pyrococcus horikoshii (strain ATCC 700860 / DSM 12428 / JCM 9974 / NBRC 100139 / OT-3).